Reading from the N-terminus, the 349-residue chain is S-adenosylmethionine decarboxylase proenzyme 3 (349 aa).

Active-site residues include glutamate 9 and glutamate 12. Glutamate 68 serves as a coordination point for substrate. Residue serine 69 is the Schiff-base intermediate with substrate; via pyruvic acid of the active site. Serine 69 is subject to Pyruvic acid (Ser); by autocatalysis. Catalysis depends on cysteine 83, which acts as the Proton donor; for catalytic activity. Active-site proton acceptor; for processing activity residues include serine 235 and histidine 248. Glutamate 252 contacts substrate.

Belongs to the eukaryotic AdoMetDC family. Pyruvate is required as a cofactor. Post-translationally, is synthesized initially as an inactive proenzyme. Formation of the active enzyme involves a self-maturation process in which the active site pyruvoyl group is generated from an internal serine residue via an autocatalytic post-translational modification. Two non-identical subunits are generated from the proenzyme in this reaction, and the pyruvate is formed at the N-terminus of the alpha chain, which is derived from the carboxyl end of the proenzyme. The post-translation cleavage follows an unusual pathway, termed non-hydrolytic serinolysis, in which the side chain hydroxyl group of the serine supplies its oxygen atom to form the C-terminus of the beta chain, while the remainder of the serine residue undergoes an oxidative deamination to produce ammonia and the pyruvoyl group blocking the N-terminus of the alpha chain.

It carries out the reaction S-adenosyl-L-methionine + H(+) = S-adenosyl 3-(methylsulfanyl)propylamine + CO2. Its pathway is amine and polyamine biosynthesis; S-adenosylmethioninamine biosynthesis; S-adenosylmethioninamine from S-adenosyl-L-methionine: step 1/1. Essential for biosynthesis of the polyamines spermidine and spermine. Essential for polyamine homeostasis, and normal plant embryogenesis, growth and development. This chain is S-adenosylmethionine decarboxylase proenzyme 3, found in Arabidopsis thaliana (Mouse-ear cress).